A 142-amino-acid polypeptide reads, in one-letter code: Hemoglobin subunit alpha-A (142 aa).

The Globin domain occupies 2–142 (VLSAADKNNV…VGTVLTAKYR (141 aa)). Position 59 (His-59) interacts with O2. Residue His-88 coordinates heme b.

Belongs to the globin family. Heterotetramer of two alpha chains and two beta chains. In terms of tissue distribution, red blood cells.

Functionally, involved in oxygen transport from the lung to the various peripheral tissues. This chain is Hemoglobin subunit alpha-A (HBAA), found in Meleagris gallopavo (Wild turkey).